Consider the following 511-residue polypeptide: Bifunctional purine biosynthesis protein PurH (511 aa).

The MGS-like domain maps to 1–147; it reads MIQIKRALIS…KNYKHTLVLT (147 aa).

This sequence belongs to the PurH family.

The catalysed reaction is (6R)-10-formyltetrahydrofolate + 5-amino-1-(5-phospho-beta-D-ribosyl)imidazole-4-carboxamide = 5-formamido-1-(5-phospho-D-ribosyl)imidazole-4-carboxamide + (6S)-5,6,7,8-tetrahydrofolate. It catalyses the reaction IMP + H2O = 5-formamido-1-(5-phospho-D-ribosyl)imidazole-4-carboxamide. Its pathway is purine metabolism; IMP biosynthesis via de novo pathway; 5-formamido-1-(5-phospho-D-ribosyl)imidazole-4-carboxamide from 5-amino-1-(5-phospho-D-ribosyl)imidazole-4-carboxamide (10-formyl THF route): step 1/1. It functions in the pathway purine metabolism; IMP biosynthesis via de novo pathway; IMP from 5-formamido-1-(5-phospho-D-ribosyl)imidazole-4-carboxamide: step 1/1. The polypeptide is Bifunctional purine biosynthesis protein PurH (Leptospira interrogans serogroup Icterohaemorrhagiae serovar Lai (strain 56601)).